The primary structure comprises 214 residues: Small ribosomal subunit protein uS2 (214 aa).

This sequence belongs to the universal ribosomal protein uS2 family.

The sequence is that of Small ribosomal subunit protein uS2 from Methanococcoides burtonii (strain DSM 6242 / NBRC 107633 / OCM 468 / ACE-M).